Here is a 171-residue protein sequence, read N- to C-terminus: UPF0763 protein HPSH_03535 (171 aa).

Belongs to the UPF0763 family.

The chain is UPF0763 protein HPSH_03535 from Helicobacter pylori (strain Shi470).